Consider the following 76-residue polypeptide: Conotoxin Vc6.6 (76 aa).

Positions methionine 1–alanine 22 are cleaved as a signal peptide. Positions valine 23–arginine 52 are excised as a propeptide. Intrachain disulfides connect cysteine 53–cysteine 67, cysteine 60–cysteine 71, and cysteine 66–cysteine 75.

This sequence belongs to the conotoxin O1 superfamily. In terms of tissue distribution, expressed by the venom duct.

The protein localises to the secreted. The chain is Conotoxin Vc6.6 from Conus victoriae (Queen Victoria cone).